We begin with the raw amino-acid sequence, 246 residues long: Deoxycytidylate 5-hydroxymethyltransferase (246 aa).

Cys-148 is a catalytic residue.

This sequence belongs to the thymidylate synthase family.

It catalyses the reaction dCMP + (6R)-5,10-methylene-5,6,7,8-tetrahydrofolate + H2O = 5-hydroxymethyl-dCMP + (6S)-5,6,7,8-tetrahydrofolate. The protein is Deoxycytidylate 5-hydroxymethyltransferase (42) of Enterobacteria phage T4 (Bacteriophage T4).